We begin with the raw amino-acid sequence, 120 residues long: Small ribosomal subunit protein uS13 (120 aa).

The interval 94–120 (GLPLRGQRTRTNARTRKGPRKAIAGKK) is disordered.

The protein belongs to the universal ribosomal protein uS13 family. As to quaternary structure, part of the 30S ribosomal subunit. Forms a loose heterodimer with protein S19. Forms two bridges to the 50S subunit in the 70S ribosome.

Located at the top of the head of the 30S subunit, it contacts several helices of the 16S rRNA. In the 70S ribosome it contacts the 23S rRNA (bridge B1a) and protein L5 of the 50S subunit (bridge B1b), connecting the 2 subunits; these bridges are implicated in subunit movement. Contacts the tRNAs in the A and P-sites. The chain is Small ribosomal subunit protein uS13 from Aromatoleum aromaticum (strain DSM 19018 / LMG 30748 / EbN1) (Azoarcus sp. (strain EbN1)).